The sequence spans 228 residues: 2-C-methyl-D-erythritol 4-phosphate cytidylyltransferase (228 aa).

It belongs to the IspD/TarI cytidylyltransferase family. IspD subfamily.

The catalysed reaction is 2-C-methyl-D-erythritol 4-phosphate + CTP + H(+) = 4-CDP-2-C-methyl-D-erythritol + diphosphate. Its pathway is isoprenoid biosynthesis; isopentenyl diphosphate biosynthesis via DXP pathway; isopentenyl diphosphate from 1-deoxy-D-xylulose 5-phosphate: step 2/6. Functionally, catalyzes the formation of 4-diphosphocytidyl-2-C-methyl-D-erythritol from CTP and 2-C-methyl-D-erythritol 4-phosphate (MEP). This is 2-C-methyl-D-erythritol 4-phosphate cytidylyltransferase from Dechloromonas aromatica (strain RCB).